The following is a 400-amino-acid chain: Phosphoglycerate kinase (400 aa).

Substrate contacts are provided by residues 23 to 25 (DLN), arginine 38, 61 to 64 (HFGR), arginine 120, and arginine 153. ATP is bound by residues lysine 203, glutamate 325, and 355 to 358 (GGDT).

It belongs to the phosphoglycerate kinase family. In terms of assembly, monomer.

It localises to the cytoplasm. The enzyme catalyses (2R)-3-phosphoglycerate + ATP = (2R)-3-phospho-glyceroyl phosphate + ADP. It participates in carbohydrate degradation; glycolysis; pyruvate from D-glyceraldehyde 3-phosphate: step 2/5. The polypeptide is Phosphoglycerate kinase (Methylorubrum extorquens (strain CM4 / NCIMB 13688) (Methylobacterium extorquens)).